Consider the following 510-residue polypeptide: MSFWLPSQGKLYLPPPTAVTQYLDTDDFVTRTDTFYHTNTERLLFVGHPYFDIKREDKVLVPKVSGSQFRVFRLKFPDPNKFSFPDPNVYNSDNQRLVWALRGIEICRGQPLGIGVTGHPSFNKFKDAENNNNKTPDQTTDDRVNMAVDPKQVQMFIVGCTPCDGEHWDVAQACDRLEPGACPPIELKNTIIEDGEMCDTGFGNMNFQKLQASKSGAPLDIVNQIVKYPDFLKMGSDPHGNSMFFYAKREQMYVRHLWSRGGTIGEEIPPNGEASPYYLPGAGRATLPTSVYFGSPSGSLVSSDQQIYNRPFWIQRAQGRNNGICWNNQLFVTAVDSTRGTNFTISVHRDKPSLEDQDTYTAAEFKHYLRHVEEWEVSLVLQLCIVDLTPEALAHINGMDPRIIESWNLGFIHAPNNIEDQYRYLQSIATRCPPKEDAAATEDPYAKYTFWDVDLTERFSMNLDQYSLGRKFLFQIGKKSRGIKRSAPKAVTFESSSRSKKAPKRRRKNV.

A disordered region spans residues 482–510 (GIKRSAPKAVTFESSSRSKKAPKRRRKNV). The segment covering 498–510 (RSKKAPKRRRKNV) has biased composition (basic residues).

This sequence belongs to the papillomaviridae L1 protein family. As to quaternary structure, self-assembles into homopentamers. The capsid has an icosahedral symmetry and consists of 72 capsomers, with each capsomer being a pentamer of L1. Interacts with the minor capsid protein L2; this interaction is necessary for viral genome encapsidation. Interacts with protein E2; this interaction enhances E2-dependent replication and transcription activation.

The protein localises to the virion. It is found in the host nucleus. Functionally, forms an icosahedral capsid with a T=7 symmetry and a 50 nm diameter. The capsid is composed of 72 pentamers linked to each other by disulfide bonds and associated with L2 proteins. Binds to heparan sulfate proteoglycans on cell surface of basal layer keratinocytes to provide initial virion attachment. This binding mediates a conformational change in the virus capsid that facilitates efficient infection. The virion enters the host cell via endocytosis. During virus trafficking, L1 protein dissociates from the viral DNA and the genomic DNA is released to the host nucleus. The virion assembly takes place within the cell nucleus. Encapsulates the genomic DNA together with protein L2. In Bos taurus (Bovine), this protein is Major capsid protein L1.